The chain runs to 100 residues: Small ribosomal subunit protein uS14c (100 aa).

The protein belongs to the universal ribosomal protein uS14 family. In terms of assembly, part of the 30S ribosomal subunit.

Its subcellular location is the plastid. It is found in the chloroplast. Functionally, binds 16S rRNA, required for the assembly of 30S particles. The protein is Small ribosomal subunit protein uS14c of Chara vulgaris (Common stonewort).